The chain runs to 239 residues: Uridylate kinase (239 aa).

An ATP-binding site is contributed by 10–13 (KLSG). Residues 18-23 (GEQGYG) form an involved in allosteric activation by GTP region. Glycine 52 serves as a coordination point for UMP. 2 residues coordinate ATP: glycine 53 and arginine 57. UMP contacts are provided by residues aspartate 72 and 133–140 (TGNPYFST). Asparagine 161, tyrosine 167, and glutamate 170 together coordinate ATP.

This sequence belongs to the UMP kinase family. Homohexamer.

The protein localises to the cytoplasm. It catalyses the reaction UMP + ATP = UDP + ADP. It functions in the pathway pyrimidine metabolism; CTP biosynthesis via de novo pathway; UDP from UMP (UMPK route): step 1/1. With respect to regulation, allosterically activated by GTP. Inhibited by UTP. Functionally, catalyzes the reversible phosphorylation of UMP to UDP. The polypeptide is Uridylate kinase (Halalkalibacterium halodurans (strain ATCC BAA-125 / DSM 18197 / FERM 7344 / JCM 9153 / C-125) (Bacillus halodurans)).